The sequence spans 99 residues: UPF0235 protein Sbal_3028 (99 aa).

It belongs to the UPF0235 family.

This is UPF0235 protein Sbal_3028 from Shewanella baltica (strain OS155 / ATCC BAA-1091).